Consider the following 234-residue polypeptide: Fibrillarin-like rRNA/tRNA 2'-O-methyltransferase (234 aa).

S-adenosyl-L-methionine contacts are provided by residues 91–92, 110–111, 137–138, and 157–160; these read TT, EF, DA, and DVAQ.

Belongs to the methyltransferase superfamily. Fibrillarin family. Interacts with nop5. Component of box C/D small ribonucleoprotein (sRNP) particles that contain rpl7ae, FlpA and nop5, plus a guide RNA.

Functionally, involved in pre-rRNA and tRNA processing. Utilizes the methyl donor S-adenosyl-L-methionine to catalyze the site-specific 2'-hydroxyl methylation of ribose moieties in rRNA and tRNA. Site specificity is provided by a guide RNA that base pairs with the substrate. Methylation occurs at a characteristic distance from the sequence involved in base pairing with the guide RNA. The polypeptide is Fibrillarin-like rRNA/tRNA 2'-O-methyltransferase (Pyrobaculum calidifontis (strain DSM 21063 / JCM 11548 / VA1)).